Consider the following 397-residue polypeptide: Homocysteine-responsive endoplasmic reticulum-resident ubiquitin-like domain member 2 protein (397 aa).

Residues 10–89 (VTLVIKAPNQ…HMVHLVCASR (80 aa)) form the Ubiquitin-like domain. Disordered regions lie at residues 87–166 (ASRS…MQGG) and 210–246 (APSPSLSAGPATQPVQPNEPAAPMGPNPAPEDRPANP). Low complexity-rich tracts occupy residues 88-123 (SRSPPSSPTSDSHFSTTDSSSSTSDSAGPSLSSTPS) and 210-220 (APSPSLSAGPA). Residues 293-313 (FVMVIGAMLLVYLHQAGWFPF) traverse the membrane as a helical segment. The interval 344–373 (DEGIEDDEGDSGEEGPDDPMNPGPHQPGFL) is disordered. The segment covering 345–360 (EGIEDDEGDSGEEGPD) has biased composition (acidic residues).

The protein resides in the membrane. Its function is as follows. Could be involved in the unfolded protein response (UPR) pathway. This Danio rerio (Zebrafish) protein is Homocysteine-responsive endoplasmic reticulum-resident ubiquitin-like domain member 2 protein (herpud2).